We begin with the raw amino-acid sequence, 203 residues long: ATP synthase subunit delta, chloroplastic (203 aa).

The protein belongs to the ATPase delta chain family. In terms of assembly, F-type ATPases have 2 components, F(1) - the catalytic core - and F(0) - the membrane proton channel. F(1) has five subunits: alpha(3), beta(3), gamma(1), delta(1), epsilon(1). CF(0) has four main subunits: a(1), b(1), b'(1) and c(10-14). The alpha and beta chains form an alternating ring which encloses part of the gamma chain. F(1) is attached to F(0) by a central stalk formed by the gamma and epsilon chains, while a peripheral stalk is formed by the delta, b and b' chains.

It is found in the plastid. The protein resides in the chloroplast thylakoid membrane. F(1)F(0) ATP synthase produces ATP from ADP in the presence of a proton or sodium gradient. F-type ATPases consist of two structural domains, F(1) containing the extramembraneous catalytic core and F(0) containing the membrane proton channel, linked together by a central stalk and a peripheral stalk. During catalysis, ATP synthesis in the catalytic domain of F(1) is coupled via a rotary mechanism of the central stalk subunits to proton translocation. Functionally, this protein is part of the stalk that links CF(0) to CF(1). It either transmits conformational changes from CF(0) to CF(1) or is implicated in proton conduction. This is ATP synthase subunit delta, chloroplastic from Heterosigma akashiwo (strain NIES-293 / 8280G21-1).